Consider the following 184-residue polypeptide: NEDD8-conjugating enzyme Ubc12 (184 aa).

The region spanning 30–175 (AGELRLHKDI…VRRAMTGGYV (146 aa)) is the UBC core domain. Catalysis depends on Cys-113, which acts as the Glycyl thioester intermediate.

This sequence belongs to the ubiquitin-conjugating enzyme family. UBC12 subfamily. In terms of assembly, interacts with RBX1. In terms of tissue distribution, expressed in shoot, root and floral meristems, and in vascular tissues of leaves.

Its pathway is protein modification; protein neddylation. In terms of biological role, accepts the ubiquitin-like protein NEDD8/RUB1 from the ECR1-AXR1 E1 complex and catalyzes its covalent attachment to other proteins. This Arabidopsis thaliana (Mouse-ear cress) protein is NEDD8-conjugating enzyme Ubc12 (RCE1).